Here is a 1524-residue protein sequence, read N- to C-terminus: Protein dispatched homolog 1 (1524 aa).

Asn59 is a glycosylation site (N-linked (GlcNAc...) asparagine). 4 helical membrane passes run 190-210, 500-520, 525-545, and 549-569; these read VVVL…GVLV, LLMD…VMCV, MFIT…SYFL, and VFHF…LVGI. The SSD domain maps to 486 to 658; it reads GIEFGIKHSL…VTWLPAVVVL (173 aa). Asn582 carries N-linked (GlcNAc...) asparagine glycosylation. Helical transmembrane passes span 604–624, 638–658, 719–739, 988–1008, 1010–1030, 1040–1060, 1079–1099, and 1107–1127; these read AALS…ANYV, GTAI…VVVL, YLWL…VCIN, MGLS…NIII, LYAI…LVLL, VTIS…GVAY, VGSA…MMMP, and QLGT…TFFF.

This sequence belongs to the dispatched family. Interacts with SHH via the cholesterol anchor of the dually lipid-modified SHH (ShhNp).

The protein localises to the membrane. Functions in hedgehog (Hh) signaling. Regulates the release and extracellular accumulation of cholesterol-modified hedgehog proteins and is hence required for effective production of the Hh signal. Synergizes with SCUBE2 to cause an increase in SHH secretion. The protein is Protein dispatched homolog 1 (DISP1) of Homo sapiens (Human).